The following is a 154-amino-acid chain: Myoglobin (154 aa).

The Globin domain maps to 2 to 148 (GLSEGEWQLV…FRKDIAAKYK (147 aa)). S4 is modified (phosphoserine). H65 is a binding site for nitrite. Position 65 (H65) interacts with O2. Position 68 is a phosphothreonine (T68). A heme b-binding site is contributed by H94.

As to quaternary structure, monomer.

Its subcellular location is the cytoplasm. The protein localises to the sarcoplasm. The enzyme catalyses Fe(III)-heme b-[protein] + nitric oxide + H2O = Fe(II)-heme b-[protein] + nitrite + 2 H(+). The catalysed reaction is H2O2 + AH2 = A + 2 H2O. Its function is as follows. Monomeric heme protein which primary function is to store oxygen and facilitate its diffusion within muscle tissues. Reversibly binds oxygen through a pentacoordinated heme iron and enables its timely and efficient release as needed during periods of heightened demand. Depending on the oxidative conditions of tissues and cells, and in addition to its ability to bind oxygen, it also has a nitrite reductase activity whereby it regulates the production of bioactive nitric oxide. Under stress conditions, like hypoxia and anoxia, it also protects cells against reactive oxygen species thanks to its pseudoperoxidase activity. In Delphinapterus leucas (Beluga whale), this protein is Myoglobin (MB).